Consider the following 362-residue polypeptide: Putative F-box protein At3g23260 (362 aa).

Positions 1–46 constitute an F-box domain; the sequence is MEWRSLPVELQEEILSRVPAKYLARLRSTSKQWNALSKTGSFAKKH.

This is Putative F-box protein At3g23260 from Arabidopsis thaliana (Mouse-ear cress).